Consider the following 282-residue polypeptide: V-set domain-containing T-cell activation inhibitor 1 (282 aa).

A signal peptide spans 1–24 (MASLGQILFWSIISIIIILAGAIA). At 25-259 (LIIGFGISGR…HLQLLNSKAS (235 aa)) the chain is on the extracellular side. Ig-like V-type domains lie at 35 to 146 (HSIT…LEYK) and 153 to 241 (PEVN…IKVT). Intrachain disulfides connect cysteine 56–cysteine 130 and cysteine 168–cysteine 225. Asparagine 216 is a glycosylation site (N-linked (GlcNAc...) asparagine). A helical membrane pass occupies residues 260–280 (LCVSSFFAISWALLPLSPYLM). Residues 281-282 (LK) are Cytoplasmic-facing.

The protein belongs to the immunoglobulin superfamily. BTN/MOG family. N-glycosylated. Overexpressed in breast, ovarian, endometrial, renal cell (RCC) and non-small-cell lung cancers (NSCLC). Expressed on activated T- and B-cells, monocytes and dendritic cells, but not expressed in most normal tissues (at protein level). Widely expressed, including in kidney, liver, lung, ovary, placenta, spleen and testis.

Its subcellular location is the cell membrane. Functionally, negatively regulates T-cell-mediated immune response by inhibiting T-cell activation, proliferation, cytokine production and development of cytotoxicity. When expressed on the cell surface of tumor macrophages, plays an important role, together with regulatory T-cells (Treg), in the suppression of tumor-associated antigen-specific T-cell immunity. Involved in promoting epithelial cell transformation. This chain is V-set domain-containing T-cell activation inhibitor 1, found in Homo sapiens (Human).